We begin with the raw amino-acid sequence, 318 residues long: MKPLKIIFAGTPDFAARHLQALIDSEHDVIATYTQPDRPAGRGKKLTASPVKALALEHAIPVFQPASLRNEEAQAELAALNADIMIVVAYGLILPKVVLDTPRLGCINVHGSILPRWRGAAPIQRALWAGDTETGVTIMQMDIGLDTGDMLLKTHLPIEATDTSASLYEKLAEQGPKALVQALIGLSDGSLKAQKQDETLANYAEKLSKEEARLDWNKSAKQLWQDIRAFNPWPVSYFEHQQSVIKVWQADYSAELCSQAPGTIIAATKQGIEIATAEGKLMIKTMQLPNKKPLDVADILNARGDWFTAGVCLNQEAN.

Ser112–Pro115 serves as a coordination point for (6S)-5,6,7,8-tetrahydrofolate.

Belongs to the Fmt family.

It catalyses the reaction L-methionyl-tRNA(fMet) + (6R)-10-formyltetrahydrofolate = N-formyl-L-methionyl-tRNA(fMet) + (6S)-5,6,7,8-tetrahydrofolate + H(+). Functionally, attaches a formyl group to the free amino group of methionyl-tRNA(fMet). The formyl group appears to play a dual role in the initiator identity of N-formylmethionyl-tRNA by promoting its recognition by IF2 and preventing the misappropriation of this tRNA by the elongation apparatus. The protein is Methionyl-tRNA formyltransferase of Shewanella frigidimarina (strain NCIMB 400).